Here is a 338-residue protein sequence, read N- to C-terminus: Nickel transporter NixA (338 aa).

A run of 8 helical transmembrane segments spans residues 11 to 31, 37 to 57, 79 to 99, 127 to 147, 187 to 207, 217 to 237, 266 to 286, and 307 to 327; these read WLPYIAIVILLHVIGFSFLWI, HILFGMGILAYTLGLRHAFDA, GVGFYFSIGHSSVVFLMAVFL, FFLVLIGVLNLIILISLINLF, VLPLGFLFGLGFDTASEIALL, AISFIGILSLPILFASGMSLL, ITAISVMAALVIGMIELLQIL, and YLGYILVALFLITWLISSLIW.

Belongs to the NiCoT transporter (TC 2.A.52) family.

It is found in the cell membrane. Its function is as follows. Secondary nickel transporter. Required for full urease activity. This Staphylococcus aureus (strain NCTC 8325 / PS 47) protein is Nickel transporter NixA.